The primary structure comprises 317 residues: L-lactate dehydrogenase (317 aa).

3 residues coordinate NAD(+): valine 16, aspartate 37, and tyrosine 68. Substrate contacts are provided by residues glutamine 85, arginine 91, 123–126 (NPCD), and 151–154 (DSAR). 121–123 (ASN) contacts NAD(+). Catalysis depends on histidine 178, which acts as the Proton acceptor. Phosphotyrosine is present on tyrosine 222. Threonine 231 contributes to the substrate binding site.

Belongs to the LDH/MDH superfamily. LDH family. In terms of assembly, homotetramer.

The protein localises to the cytoplasm. It catalyses the reaction (S)-lactate + NAD(+) = pyruvate + NADH + H(+). Its pathway is fermentation; pyruvate fermentation to lactate; (S)-lactate from pyruvate: step 1/1. Functionally, catalyzes the conversion of lactate to pyruvate. This chain is L-lactate dehydrogenase, found in Mesoplasma florum (strain ATCC 33453 / NBRC 100688 / NCTC 11704 / L1) (Acholeplasma florum).